The chain runs to 144 residues: Large ribosomal subunit protein uL15 (144 aa).

The tract at residues 1 to 54 (MKLNTIKPAEGAKHARRRVGRGIGSGLGKTGGRGHKGQKSRAGGFHKVGFEGGQ) is disordered. The segment covering 21 to 31 (RGIGSGLGKTG) has biased composition (gly residues).

It belongs to the universal ribosomal protein uL15 family. Part of the 50S ribosomal subunit.

In terms of biological role, binds to the 23S rRNA. The chain is Large ribosomal subunit protein uL15 from Methylobacillus flagellatus (strain ATCC 51484 / DSM 6875 / VKM B-1610 / KT).